Consider the following 488-residue polypeptide: UDP-GalNAc:beta-1,3-N-acetylgalactosaminyltransferase 2 (488 aa).

Over 1–2 (MR) the chain is Cytoplasmic. Residues 3–23 (HLLLLFLCPCAIGVAFHLWLF) form a helical; Signal-anchor for type II membrane protein membrane-spanning segment. N-linked (GlcNAc...) asparagine glycans are attached at residues Asn24, Asn105, and Asn162. Residues 24 to 488 (NFSGLFTWFP…CGNPCACEDR (465 aa)) are Lumenal-facing.

The protein belongs to the glycosyltransferase 31 family.

It is found in the golgi apparatus membrane. It localises to the endoplasmic reticulum. The catalysed reaction is 3-O-(N-acetyl-beta-D-glucosaminyl-(1-&gt;4)-alpha-D-mannosyl)-L-threonyl-[protein] + UDP-N-acetyl-alpha-D-galactosamine = 3-O-[beta-D-GalNAc-(1-&gt;3)-beta-D-GlcNAc-(1-&gt;4)-alpha-D-Man]-L-Thr-[protein] + UDP + H(+). It functions in the pathway protein modification; protein glycosylation. In terms of biological role, beta-1,3-N-acetylgalactosaminyltransferase that synthesizes a unique carbohydrate structure, GalNAc-beta-1-3GlcNAc, on N- and O-glycans. Has no galactose nor galactosaminyl transferase activity toward any acceptor substrate. Involved in alpha-dystroglycan (dag1) glycosylation. The protein is UDP-GalNAc:beta-1,3-N-acetylgalactosaminyltransferase 2 (b3galnt2) of Xenopus tropicalis (Western clawed frog).